The primary structure comprises 156 residues: Cell division protein SepF (156 aa).

Residues 23–36 (SYEKEQTDMKKQQD) show a composition bias toward basic and acidic residues. The disordered stretch occupies residues 23–49 (SYEKEQTDMKKQQDPPEQQDVTFPKAQ).

The protein belongs to the SepF family. As to quaternary structure, homodimer. Interacts with FtsZ.

Its subcellular location is the cytoplasm. Its function is as follows. Cell division protein that is part of the divisome complex and is recruited early to the Z-ring. Probably stimulates Z-ring formation, perhaps through the cross-linking of FtsZ protofilaments. Its function overlaps with FtsA. This Bacillus anthracis (strain CDC 684 / NRRL 3495) protein is Cell division protein SepF.